The chain runs to 508 residues: Phenylalanine--tRNA ligase alpha subunit (508 aa).

Alanine 2 is modified (N-acetylalanine). Phosphoserine occurs at positions 193 and 301. At lysine 311 the chain carries N6-acetyllysine. L-phenylalanine is bound by residues threonine 329, 372-374 (QIE), and tyrosine 412. Glutamate 414 is a Mg(2+) binding site. Phenylalanine 438 contributes to the L-phenylalanine binding site.

Belongs to the class-II aminoacyl-tRNA synthetase family. Phe-tRNA synthetase alpha subunit type 2 subfamily. Heterotetramer; dimer of two heterodimers formed by FARSA and FARSB. Requires Mg(2+) as cofactor.

It is found in the cytoplasm. The catalysed reaction is tRNA(Phe) + L-phenylalanine + ATP = L-phenylalanyl-tRNA(Phe) + AMP + diphosphate + H(+). The polypeptide is Phenylalanine--tRNA ligase alpha subunit (Farsa) (Rattus norvegicus (Rat)).